Consider the following 284-residue polypeptide: Bifunctional protein FolD (284 aa).

NADP(+) contacts are provided by residues 166 to 168, S191, and I232; that span reads GAS.

The protein belongs to the tetrahydrofolate dehydrogenase/cyclohydrolase family. As to quaternary structure, homodimer.

The enzyme catalyses (6R)-5,10-methylene-5,6,7,8-tetrahydrofolate + NADP(+) = (6R)-5,10-methenyltetrahydrofolate + NADPH. It carries out the reaction (6R)-5,10-methenyltetrahydrofolate + H2O = (6R)-10-formyltetrahydrofolate + H(+). The protein operates within one-carbon metabolism; tetrahydrofolate interconversion. In terms of biological role, catalyzes the oxidation of 5,10-methylenetetrahydrofolate to 5,10-methenyltetrahydrofolate and then the hydrolysis of 5,10-methenyltetrahydrofolate to 10-formyltetrahydrofolate. The polypeptide is Bifunctional protein FolD (Thiobacillus denitrificans (strain ATCC 25259 / T1)).